The primary structure comprises 360 residues: Phospho-N-acetylmuramoyl-pentapeptide-transferase (360 aa).

10 helical membrane-spanning segments follow: residues 27–47 (GATA…IAAL), 74–94 (TMGG…WANL), 99–119 (VWVV…DDYL), 135–155 (LLLE…LGTP), 165–185 (INGF…FVIV), 199–219 (GLAI…AYLA), 236–256 (AGEL…FLWF), 263–283 (IFMG…VAVA), 288–308 (IVLA…IVQV), and 337–357 (QVVV…LSTL).

The protein belongs to the glycosyltransferase 4 family. MraY subfamily. Mg(2+) serves as cofactor.

It is found in the cell inner membrane. It carries out the reaction UDP-N-acetyl-alpha-D-muramoyl-L-alanyl-gamma-D-glutamyl-meso-2,6-diaminopimeloyl-D-alanyl-D-alanine + di-trans,octa-cis-undecaprenyl phosphate = di-trans,octa-cis-undecaprenyl diphospho-N-acetyl-alpha-D-muramoyl-L-alanyl-D-glutamyl-meso-2,6-diaminopimeloyl-D-alanyl-D-alanine + UMP. It participates in cell wall biogenesis; peptidoglycan biosynthesis. In terms of biological role, catalyzes the initial step of the lipid cycle reactions in the biosynthesis of the cell wall peptidoglycan: transfers peptidoglycan precursor phospho-MurNAc-pentapeptide from UDP-MurNAc-pentapeptide onto the lipid carrier undecaprenyl phosphate, yielding undecaprenyl-pyrophosphoryl-MurNAc-pentapeptide, known as lipid I. The protein is Phospho-N-acetylmuramoyl-pentapeptide-transferase of Methylocella silvestris (strain DSM 15510 / CIP 108128 / LMG 27833 / NCIMB 13906 / BL2).